The chain runs to 823 residues: Endoplasmin homolog (823 aa).

An N-terminal signal peptide occupies residues 1-23; that stretch reads MRKRTLVSVLFLFSLLFLLPDQG. Positions 29–60 are disordered; it reads NAEESSDDVTDPPKVEEKIGGHGGLSTDSDVV. Basic and acidic residues predominate over residues 39–48; sequence DPPKVEEKIG. Residues E106, N110, D154, M159, N167, K173, 174-175, 194-199, F199, and T246 each bind ATP; these read SG and QFGVGF. N110 carries an N-linked (GlcNAc...) asparagine glycan. The interval 289–328 is disordered; sequence ETEVPVEEDESADEETETTSTEEEKEEDAEEEDGEKKQKT. Positions 290–321 are enriched in acidic residues; that stretch reads TEVPVEEDESADEETETTSTEEEKEEDAEEED. N-linked (GlcNAc...) asparagine glycosylation is found at N452 and N620. Positions 777–792 are enriched in acidic residues; it reads VADEEIEAAEEPETSE. The interval 777 to 823 is disordered; the sequence is VADEEIEAAEEPETSEATETKSDDLAGGLNIEAEPVEQQEENTKDEL. Positions 820–823 match the Prevents secretion from ER motif; the sequence is KDEL.

It belongs to the heat shock protein 90 family. Interacts with FKBP42. Interacts with P23-1. Ubiquitous.

It is found in the endoplasmic reticulum lumen. Functionally, may have a molecular chaperone role in the processing of secreted materials. Required for shoot apical meristem (SAM), root apical meristem (RAM) and floral meristem (FM) formation, probably by regulating the folding of CLAVATA proteins (CLVs). Also involved in pollen tube elongation. Involved in resistance to tunicamycin- or high calcium-induced ER stresses. Possesses ATPase activity. This chain is Endoplasmin homolog, found in Arabidopsis thaliana (Mouse-ear cress).